Here is a 22-residue protein sequence, read N- to C-terminus: Alpha-amylase inhibitor DR4 (22 aa).

The disordered stretch occupies residues 1 to 22 (SGGGKEAAETFNRVESHPRPDA).

In terms of biological role, inhibits insect alpha-amylases. The protein is Alpha-amylase inhibitor DR4 of Delonix regia (Royal poinciana).